Reading from the N-terminus, the 406-residue chain is Cysteine desulfurase (406 aa).

Lysine 226 is modified (N6-(pyridoxal phosphate)lysine). Cysteine 364 acts as the Cysteine persulfide intermediate in catalysis.

This sequence belongs to the class-V pyridoxal-phosphate-dependent aminotransferase family. Csd subfamily. As to quaternary structure, homodimer. Interacts with SufE and the SufBCD complex composed of SufB, SufC and SufD. The interaction with SufE is required to mediate the direct transfer of the sulfur atom from the S-sulfanylcysteine. Requires pyridoxal 5'-phosphate as cofactor.

The protein localises to the cytoplasm. It catalyses the reaction (sulfur carrier)-H + L-cysteine = (sulfur carrier)-SH + L-alanine. The enzyme catalyses L-selenocysteine + AH2 = hydrogenselenide + L-alanine + A + H(+). Its pathway is cofactor biosynthesis; iron-sulfur cluster biosynthesis. Cysteine desulfurases mobilize the sulfur from L-cysteine to yield L-alanine, an essential step in sulfur metabolism for biosynthesis of a variety of sulfur-containing biomolecules. Component of the suf operon, which is activated and required under specific conditions such as oxidative stress and iron limitation. Acts as a potent selenocysteine lyase in vitro, that mobilizes selenium from L-selenocysteine. Selenocysteine lyase activity is however unsure in vivo. The polypeptide is Cysteine desulfurase (Escherichia coli O45:K1 (strain S88 / ExPEC)).